The sequence spans 220 residues: MTGNASGRKPLNLAATQGGASGRQKKLPAALLFTDTLPDDLVEVGYVGAAYGIRGWIKVQPHADDASALLHARRWWLLRAPPAGVVSAPAQSAEAVSIKISQSREHSGTVVAQPAGVSDRSVAEMLKGRRVWVRRADFPAAEEGEFYWVDLIGCAVVNEQGEALGEVTGLIDNGAHQILQVAYELPDGKAAERLIPFVDAFLRTVDTPARRIVVDWGLDY.

In terms of domain architecture, PRC barrel spans 143–220 (EGEFYWVDLI…RIVVDWGLDY (78 aa)).

It belongs to the RimM family. Binds ribosomal protein uS19.

The protein resides in the cytoplasm. Its function is as follows. An accessory protein needed during the final step in the assembly of 30S ribosomal subunit, possibly for assembly of the head region. Essential for efficient processing of 16S rRNA. May be needed both before and after RbfA during the maturation of 16S rRNA. It has affinity for free ribosomal 30S subunits but not for 70S ribosomes. The chain is Ribosome maturation factor RimM from Cupriavidus metallidurans (strain ATCC 43123 / DSM 2839 / NBRC 102507 / CH34) (Ralstonia metallidurans).